An 84-amino-acid chain; its full sequence is Large ribosomal subunit protein bL31B (84 aa).

Belongs to the bacterial ribosomal protein bL31 family. Type B subfamily. In terms of assembly, part of the 50S ribosomal subunit.

The sequence is that of Large ribosomal subunit protein bL31B from Alkalilimnicola ehrlichii (strain ATCC BAA-1101 / DSM 17681 / MLHE-1).